We begin with the raw amino-acid sequence, 1225 residues long: DNA-directed RNA polymerase subunit beta' (1225 aa).

The Zn(2+) site is built by C60, C62, C75, and C78. Residues D450, D452, and D454 each contribute to the Mg(2+) site. The Zn(2+) site is built by C818, C892, C899, and C902.

The protein belongs to the RNA polymerase beta' chain family. The RNAP catalytic core consists of 2 alpha, 1 beta, 1 beta' and 1 omega subunit. When a sigma factor is associated with the core the holoenzyme is formed, which can initiate transcription. The cofactor is Mg(2+). Zn(2+) serves as cofactor.

It catalyses the reaction RNA(n) + a ribonucleoside 5'-triphosphate = RNA(n+1) + diphosphate. Its function is as follows. DNA-dependent RNA polymerase catalyzes the transcription of DNA into RNA using the four ribonucleoside triphosphates as substrates. The sequence is that of DNA-directed RNA polymerase subunit beta' from Streptococcus pneumoniae serotype 19F (strain G54).